We begin with the raw amino-acid sequence, 252 residues long: Glucosamine-6-phosphate deaminase (252 aa).

Catalysis depends on Asp-67, which acts as the Proton acceptor; for enolization step. Catalysis depends on Asn-137, which acts as the For ring-opening step. His-139 acts as the Proton acceptor; for ring-opening step in catalysis. The active-site For ring-opening step is Glu-144.

This sequence belongs to the glucosamine/galactosamine-6-phosphate isomerase family. NagB subfamily.

The catalysed reaction is alpha-D-glucosamine 6-phosphate + H2O = beta-D-fructose 6-phosphate + NH4(+). The protein operates within amino-sugar metabolism; N-acetylneuraminate degradation; D-fructose 6-phosphate from N-acetylneuraminate: step 5/5. Functionally, catalyzes the reversible isomerization-deamination of glucosamine 6-phosphate (GlcN6P) to form fructose 6-phosphate (Fru6P) and ammonium ion. The chain is Glucosamine-6-phosphate deaminase from Staphylococcus aureus (strain Mu3 / ATCC 700698).